The sequence spans 141 residues: Putative nickel-responsive regulator (141 aa).

Residues His-80, His-91, His-93, and Cys-99 each coordinate Ni(2+).

It belongs to the transcriptional regulatory CopG/NikR family. The cofactor is Ni(2+).

Its function is as follows. Transcriptional regulator. The chain is Putative nickel-responsive regulator from Methanococcus maripaludis (strain DSM 14266 / JCM 13030 / NBRC 101832 / S2 / LL).